We begin with the raw amino-acid sequence, 313 residues long: Pre-mRNA-splicing factor 38A (313 aa).

Residues 1–179 form an N-terminal protein interaction domain region; that stretch reads MANRTVKDAN…VLEEAELLDP (179 aa). Positions 172-201 form a coiled coil; that stretch reads EEAELLDPRISALEEDLDEVETSEEEDDED. The tract at residues 182-313 is disordered; it reads SALEEDLDEV…SHKRSRRGNE (132 aa). Residues 184 to 202 are compositionally biased toward acidic residues; that stretch reads LEEDLDEVETSEEEDDEDE. Basic and acidic residues predominate over residues 203–224; the sequence is KPERMQSPEPHRRSYRDMDRPR. Basic residues-rich tracts occupy residues 225–250, 260–294, and 302–313; these read RSPS…RSPS, HRSK…RSHS, and KKSHKRSRRGNE.

It belongs to the PRP38 family. As to quaternary structure, component of the spliceosome B complex.

It localises to the nucleus. In terms of biological role, involved in pre-mRNA splicing as a component of the spliceosome. This chain is Pre-mRNA-splicing factor 38A (prpf38a), found in Danio rerio (Zebrafish).